We begin with the raw amino-acid sequence, 368 residues long: Glycolate oxidase 2 (368 aa).

An FMN hydroxy acid dehydrogenase domain is found at M1 to D360. Residues P78–A80, S107, Q128–S130, and T156 contribute to the FMN site. R165 contributes to the glyoxylate binding site. K231 and S253 together coordinate FMN. The glyoxylate site is built by H255 and R258. H255 (proton acceptor) is an active-site residue. Residues D286 to R290 and G309 to R310 each bind FMN. The short motif at S366–L368 is the Microbody targeting signal element.

This sequence belongs to the FMN-dependent alpha-hydroxy acid dehydrogenase family. Homotetramer. FMN is required as a cofactor.

Its subcellular location is the peroxisome. The enzyme catalyses glycolate + O2 = glyoxylate + H2O2. The protein operates within photosynthesis; photorespiration; glycine from 2-phosphoglycolate: step 2/3. Its function is as follows. Catalyzes the oxidation of glycolate to glyoxylate, with a reduction of O2 to H2O2. Is a key enzyme in photorespiration in green plants. The polypeptide is Glycolate oxidase 2 (GLO2) (Oryza sativa subsp. indica (Rice)).